Consider the following 248-residue polypeptide: Probable transcriptional regulatory protein Mnod_7401 (248 aa).

It belongs to the TACO1 family.

The protein resides in the cytoplasm. The protein is Probable transcriptional regulatory protein Mnod_7401 of Methylobacterium nodulans (strain LMG 21967 / CNCM I-2342 / ORS 2060).